A 213-amino-acid polypeptide reads, in one-letter code: uncharacterized protein (213 aa).

Over residues 1–14 (MSSDVLVTTPAQRQ) the composition is skewed to polar residues. Residues 1-26 (MSSDVLVTTPAQRQTEPHAEAVSRNR) form a disordered region. Positions 29-89 (QATFRKVLAA…EVYLDLVRQV (61 aa)) constitute an HTH tetR-type domain.

This is an uncharacterized protein from Mycobacterium tuberculosis (strain CDC 1551 / Oshkosh).